We begin with the raw amino-acid sequence, 193 residues long: Cysteine and glycine-rich protein 1 (193 aa).

The region spanning 10–61 is the LIM zinc-binding 1 domain; the sequence is CGVCQKTVYFAEEVQCEGNSFHKSCFLCMVCKKNLDSTTVAVHGEEIYCKSC. The Nuclear localization signal signature appears at 64–69; that stretch reads KKYGPK. Serine 81 bears the Phosphoserine mark. Position 84 is an N6-acetyllysine (lysine 84). Lysine 91 participates in a covalent cross-link: Glycyl lysine isopeptide (Lys-Gly) (interchain with G-Cter in SUMO2). N6-acetyllysine is present on residues lysine 112, lysine 131, lysine 137, and lysine 161. The region spanning 119-170 is the LIM zinc-binding 2 domain; sequence CPRCSQAVYAAEKVIGAGKSWHKSCFRCAKCGKGLESTTLADKDGEIYCKGC. Serine 192 is modified (phosphoserine).

As to quaternary structure, interacts with ASCC1; ASCC2 and TRIP4.

The protein localises to the nucleus. Its function is as follows. Could play a role in neuronal development. The protein is Cysteine and glycine-rich protein 1 (Csrp1) of Mus musculus (Mouse).